The following is a 99-amino-acid chain: MALTLTDVKRIAHLARLELADADAEHTLVQLNDFFGLVEQMQAVDTSGIAPLAHPIEQIEDVALRLRNDVVTETVEREAFQRPAPAVQDGLYLVPKVIE.

Belongs to the GatC family. In terms of assembly, heterotrimer of A, B and C subunits.

The catalysed reaction is L-glutamyl-tRNA(Gln) + L-glutamine + ATP + H2O = L-glutaminyl-tRNA(Gln) + L-glutamate + ADP + phosphate + H(+). The enzyme catalyses L-aspartyl-tRNA(Asn) + L-glutamine + ATP + H2O = L-asparaginyl-tRNA(Asn) + L-glutamate + ADP + phosphate + 2 H(+). Functionally, allows the formation of correctly charged Asn-tRNA(Asn) or Gln-tRNA(Gln) through the transamidation of misacylated Asp-tRNA(Asn) or Glu-tRNA(Gln) in organisms which lack either or both of asparaginyl-tRNA or glutaminyl-tRNA synthetases. The reaction takes place in the presence of glutamine and ATP through an activated phospho-Asp-tRNA(Asn) or phospho-Glu-tRNA(Gln). The sequence is that of Aspartyl/glutamyl-tRNA(Asn/Gln) amidotransferase subunit C from Paraburkholderia phytofirmans (strain DSM 17436 / LMG 22146 / PsJN) (Burkholderia phytofirmans).